The sequence spans 415 residues: Protein PIN-LIKES 4 (415 aa).

Topologically, residues Met-1–Pro-13 are lumenal. Residues Val-14 to Leu-34 traverse the membrane as a helical segment. Residues Leu-35–Asn-44 are Cytoplasmic-facing. The helical transmembrane segment at Asn-45 to Ala-61 threads the bilayer. The Lumenal portion of the chain corresponds to Asp-62–Met-75. A helical transmembrane segment spans residues Pro-76 to Ile-96. Topologically, residues Thr-97 to Leu-106 are cytoplasmic. A helical membrane pass occupies residues Ile-107 to Ile-127. The Lumenal segment spans residues Cys-128–Lys-143. Residues Tyr-144 to Tyr-161 traverse the membrane as a helical segment. The Cytoplasmic segment spans residues Lys-162–Asn-244. The chain crosses the membrane as a helical span at residues Leu-245–Ile-265. The Lumenal segment spans residues Thr-266–Ser-285. The helical transmembrane segment at Leu-286–Leu-306 threads the bilayer. The Cytoplasmic segment spans residues Lys-307–Ser-322. A helical membrane pass occupies residues Cys-323–Val-343. Over Arg-344–Glu-355 the chain is Lumenal. A helical membrane pass occupies residues Pro-356–Thr-376. The Cytoplasmic portion of the chain corresponds to Lys-377–Ser-389. A helical membrane pass occupies residues Val-390–Phe-410. The Lumenal portion of the chain corresponds to Met-411–Thr-415.

The protein belongs to the auxin efflux carrier (TC 2.A.69.2) family. Expressed in seedlings, rosette and cauline leaves, stems, flowers and siliques.

It is found in the endoplasmic reticulum membrane. Functionally, involved in cellular auxin homeostasis by regulating auxin metabolism. Regulates intracellular auxin accumulation at the endoplasmic reticulum and thus auxin availability for nuclear auxin signaling. The sequence is that of Protein PIN-LIKES 4 from Arabidopsis thaliana (Mouse-ear cress).